The chain runs to 439 residues: Hydroxyornithine transacylase SID3 (439 aa).

A PTS1-type peroxisomal targeting signal motif is present at residues 437-439 (SKL).

The protein belongs to the lysine N-acyltransferase mbtK family.

The protein resides in the peroxisome. It participates in siderophore biosynthesis. In terms of biological role, hydroxyornithine transacylase; part of the gene cluster that mediates the biosynthesis of hydroxamate-containing siderophores that play a critical role in virulence via intracellular iron acquisition during macrophage infection. The protein is Hydroxyornithine transacylase SID3 of Ajellomyces capsulatus (Darling's disease fungus).